A 147-amino-acid chain; its full sequence is Ubiquitin-conjugating enzyme E2-16 kDa (147 aa).

Positions 1–147 (MALKRINKEL…AREWTRKYAI (147 aa)) constitute a UBC core domain. The active-site Glycyl thioester intermediate is C107.

It belongs to the ubiquitin-conjugating enzyme family.

The catalysed reaction is S-ubiquitinyl-[E1 ubiquitin-activating enzyme]-L-cysteine + [E2 ubiquitin-conjugating enzyme]-L-cysteine = [E1 ubiquitin-activating enzyme]-L-cysteine + S-ubiquitinyl-[E2 ubiquitin-conjugating enzyme]-L-cysteine.. It functions in the pathway protein modification; protein ubiquitination. In terms of biological role, catalyzes the covalent attachment of ubiquitin to other proteins. This is Ubiquitin-conjugating enzyme E2-16 kDa (UBC1) from Pyricularia oryzae (strain 70-15 / ATCC MYA-4617 / FGSC 8958) (Rice blast fungus).